The following is a 223-amino-acid chain: Ribonuclease HII (223 aa).

The RNase H type-2 domain maps to Met1–Lys219. Residues Asp7, Glu8, and Asp105 each contribute to the a divalent metal cation site.

This sequence belongs to the RNase HII family. Mn(2+) is required as a cofactor. It depends on Mg(2+) as a cofactor.

The protein localises to the cytoplasm. It catalyses the reaction Endonucleolytic cleavage to 5'-phosphomonoester.. Its function is as follows. Endonuclease that specifically degrades the RNA of RNA-DNA hybrids. This Methanosarcina acetivorans (strain ATCC 35395 / DSM 2834 / JCM 12185 / C2A) protein is Ribonuclease HII.